Consider the following 471-residue polypeptide: UDP-glycosyltransferase 1 (471 aa).

Histidine 15 functions as the Proton acceptor in the catalytic mechanism. Histidine 15 contacts an anthocyanidin. Aspartate 124 acts as the Charge relay in catalysis. UDP-alpha-D-glucose is bound by residues threonine 146, alanine 348, glutamine 350, histidine 365, tryptophan 368, asparagine 369, serine 370, and glutamate 373. Alanine 388 lines the an anthocyanidin pocket. Residues glutamate 389 and glutamine 390 each contribute to the UDP-alpha-D-glucose site.

This sequence belongs to the UDP-glycosyltransferase family. As to expression, expressed in roots. Detected in stems and leaves.

The catalysed reaction is a 7-hydroxyisoflavone + UDP-alpha-D-glucose = a 7-hydroxyisoflavone 7-O-beta-D-glucoside + UDP + H(+). Isoflavone 7-O-glucosyltransferase converting daidzein to daidzin, genistein to genistin and formononetin to ononin. Shows some activity toward the chalcone isoliquiritigenin, the flavanones liquiritigenin and naringenin, and the flavone apigenin, but not toward cyanidin, luteolin, kaempferol, quercetin, daidzin and puerarin. This is UDP-glycosyltransferase 1 from Pueraria montana var. lobata (Kudzu vine).